Here is a 679-residue protein sequence, read N- to C-terminus: NADPH--cytochrome P450 reductase (679 aa).

The Lumenal portion of the chain corresponds to 1-21; the sequence is MASEQTIDGAAAIPSGGGDEP. The helical transmembrane segment at 22–42 threads the bilayer; that stretch reads FLGLLDVALLAVLIGGAAFYF. Topologically, residues 43–679 are cytoplasmic; the sequence is LRSRKKEEEP…QKRYSADVWS (637 aa). The region spanning 84–228 is the Flavodoxin-like domain; it reads LVVFYGSQTG…DFITWKDRFW (145 aa). FMN-binding positions include 90–95, 142–145, 177–186, and Asp-212; these read SQTGTG, ATYG, and LGNKTYEHYN. One can recognise an FAD-binding FR-type domain in the interval 283–523; that stretch reads KNPFLAPIKV…FIRKSQFRLP (241 aa). Arg-302 contributes to the NADP(+) binding site. Residues 458 to 461, 476 to 478, Tyr-482, and 492 to 495 contribute to the FAD site; these read RYYS, TAV, and GVAT. NADP(+) is bound by residues Thr-537, 597-598, 603-607, and Asp-640; these read SR and KVYVQ. Trp-678 lines the FAD pocket.

Belongs to the NADPH--cytochrome P450 reductase family. It in the N-terminal section; belongs to the flavodoxin family. This sequence in the C-terminal section; belongs to the flavoprotein pyridine nucleotide cytochrome reductase family. In terms of assembly, interacts with sturkopf. It depends on FAD as a cofactor. The cofactor is FMN. As to expression, high in antennae.

It localises to the endoplasmic reticulum membrane. The enzyme catalyses 2 oxidized [cytochrome P450] + NADPH = 2 reduced [cytochrome P450] + NADP(+) + H(+). In terms of biological role, this enzyme is required for electron transfer from NADP to cytochrome p450 in microsomes. It can also provide electron transfer to heme oxygenase and cytochrome b5. May function to clear the olfactory organ (antennae) from accumulating chemicals. This is NADPH--cytochrome P450 reductase (Cpr) from Drosophila melanogaster (Fruit fly).